The chain runs to 426 residues: Protein prenyltransferase alpha subunit repeat-containing protein 1 (426 aa).

PFTA repeat units follow at residues alanine 86–proline 119, lysine 121–cysteine 154, glutamate 180–asparagine 213, and aspartate 219–leucine 252. Residues alanine 255–histidine 279 are disordered. Residues threonine 262–serine 275 show a composition bias toward polar residues. A PFTA 5 repeat occupies glutamate 290 to arginine 323.

Belongs to the protein prenyltransferase subunit alpha family.

The polypeptide is Protein prenyltransferase alpha subunit repeat-containing protein 1 (ptar1) (Danio rerio (Zebrafish)).